A 1616-amino-acid polypeptide reads, in one-letter code: Myosin-IIIa (1616 aa).

The 267-residue stretch at 21–287 (WEITETIGKG…VSELLQHKFI (267 aa)) folds into the Protein kinase domain. ATP contacts are provided by residues 27–35 (IGKGTYGKV) and lysine 50. The active-site Proton acceptor is the aspartate 150. The 716-residue stretch at 338–1053 (KDVDDLATLE…HVEQLNLMRK (716 aa)) folds into the Myosin motor domain. Positions 934–956 (LMDLLSKMVVGQPHFVRCIKPNS) are actin-binding. IQ domains lie at 1055–1084 (AIDK…KRKE), 1082–1111 (RKES…MKNT), and 1346–1375 (EDKA…SSFK). Residues 1401–1479 (EEINNIKKKD…RRVSSQQCLS (79 aa)) form an interaction with MORN4 region. 2 disordered regions span residues 1545-1567 (LPSR…QQEL) and 1581-1616 (AESP…VQQS). Basic and acidic residues-rich tracts occupy residues 1550–1564 (GPKE…RRPQ) and 1583–1592 (SPEKEEEREP). The span at 1602–1616 (LLRKTSQRRRLVQQS) shows a compositional bias: basic residues.

The protein in the C-terminal section; belongs to the TRAFAC class myosin-kinesin ATPase superfamily. Myosin family. This sequence in the N-terminal section; belongs to the protein kinase superfamily. STE Ser/Thr protein kinase family. As to quaternary structure, interacts with MORN4. Interacts (via C-terminus) with ESPN and ESPNL. As to expression, strongest expression in retina, retinal pigment epithelial cells, cochlea and pancreas.

Its subcellular location is the cytoplasm. The protein localises to the cytoskeleton. The protein resides in the cell projection. It localises to the filopodium tip. It is found in the stereocilium. The catalysed reaction is L-seryl-[protein] + ATP = O-phospho-L-seryl-[protein] + ADP + H(+). It carries out the reaction L-threonyl-[protein] + ATP = O-phospho-L-threonyl-[protein] + ADP + H(+). The enzyme catalyses ATP + H2O = ADP + phosphate + H(+). Actin-dependent motor protein with a protein kinase activity, playing an essential role in hearing. Probably also plays a role in vision. Required for normal cochlear hair bundle development and hearing. Plays an important role in the early steps of cochlear hair bundle morphogenesis. Influences the number and lengths of stereocilia to be produced and limits the growth of microvilli within the forming auditory hair bundles thereby contributing to the architecture of the hair bundle, including its staircase pattern. Involved in the elongation of actin in stereocilia tips by transporting the actin regulatory factor ESPN to the plus ends of actin filaments. In Homo sapiens (Human), this protein is Myosin-IIIa (MYO3A).